The primary structure comprises 202 residues: Solute carrier family 66 member 3 (202 aa).

The N-terminal stretch at 1–19 is a signal peptide; sequence MEAALLGLCNWSTLGVCAA. 4 helical membrane-spanning segments follow: residues 33–53, 64–84, 97–117, and 171–191; these read SARGLSLPSLLLELAGFLVFL, LTYLEYPILIAQDVILLLCIF, IAVLVSSWFILALQKWIIDLA, and FTILLRFVIMLALNIWVTVTV.

The protein resides in the membrane. The polypeptide is Solute carrier family 66 member 3 (Homo sapiens (Human)).